The sequence spans 475 residues: Ribulose bisphosphate carboxylase large chain (475 aa).

A propeptide spanning residues 1 to 2 (MS) is cleaved from the precursor. At Pro-3 the chain carries N-acetylproline. The residue at position 14 (Lys-14) is an N6,N6,N6-trimethyllysine. Substrate-binding residues include Asn-123 and Thr-173. Lys-175 serves as the catalytic Proton acceptor. A substrate-binding site is contributed by Lys-177. 3 residues coordinate Mg(2+): Lys-201, Asp-203, and Glu-204. An N6-carboxylysine modification is found at Lys-201. His-294 acts as the Proton acceptor in catalysis. Positions 295, 327, and 379 each coordinate substrate.

It belongs to the RuBisCO large chain family. Type I subfamily. As to quaternary structure, heterohexadecamer of 8 large chains and 8 small chains; disulfide-linked. The disulfide link is formed within the large subunit homodimers. The cofactor is Mg(2+). In terms of processing, the disulfide bond which can form in the large chain dimeric partners within the hexadecamer appears to be associated with oxidative stress and protein turnover.

It localises to the plastid. The protein localises to the chloroplast. It carries out the reaction 2 (2R)-3-phosphoglycerate + 2 H(+) = D-ribulose 1,5-bisphosphate + CO2 + H2O. The catalysed reaction is D-ribulose 1,5-bisphosphate + O2 = 2-phosphoglycolate + (2R)-3-phosphoglycerate + 2 H(+). Its function is as follows. RuBisCO catalyzes two reactions: the carboxylation of D-ribulose 1,5-bisphosphate, the primary event in carbon dioxide fixation, as well as the oxidative fragmentation of the pentose substrate in the photorespiration process. Both reactions occur simultaneously and in competition at the same active site. The protein is Ribulose bisphosphate carboxylase large chain of Amborella trichopoda.